The primary structure comprises 1762 residues: ADAMTS-like protein 1 (1762 aa).

The N-terminal stretch at 1–28 is a signal peptide; sequence MECCRRATPGTLLLFLAFLLLSSRTARS. The TSP type-1 1 domain occupies 33–82; it reads DGLWDAWGPWSECSRTCGGGASYSLRRCLSSKSCEGRNIRYRTCSNVDCP. Residues tryptophan 39 and tryptophan 42 are each glycosylated (C-linked (Man) tryptophan). Cystine bridges form between cysteine 45/cysteine 76, cysteine 49/cysteine 81, and cysteine 60/cysteine 66. An O-linked (Fuc...) threonine glycan is attached at threonine 48. N-linked (GlcNAc...) asparagine glycosylation is present at asparagine 251. The O-linked (Fuc...) threonine glycan is linked to threonine 312. 6 consecutive TSP type-1 domains span residues 376–424, 436–493, 522–584, 607–665, 666–729, and 788–850; these read PLPR…MYTP, DCPK…TPCY, EEPS…GPCS, ELYD…NLDP, CPAR…FNCP, and CPSE…ATCA. Serine 391 carries an O-linked (Fuc...) serine glycan. A glycan (O-linked (Fuc...) threonine) is linked at threonine 451. 3 cysteine pairs are disulfide-bonded: cysteine 534-cysteine 578, cysteine 538-cysteine 583, and cysteine 549-cysteine 567. 7 cysteine pairs are disulfide-bonded: cysteine 678-cysteine 723, cysteine 682-cysteine 728, cysteine 693-cysteine 712, cysteine 800-cysteine 844, cysteine 804-cysteine 849, cysteine 815-cysteine 832, and cysteine 899-cysteine 947. The Ig-like C2-type 1 domain occupies 861–963; it reads PHIAAARKVY…EHFVIKLIGG (103 aa). The segment at 1120–1164 is disordered; the sequence is LKPSERRTSPVTLSPHKHVSGFSSSLRTSSTGDAGGGSRRPHRKP. Residues 1139 to 1151 are compositionally biased toward low complexity; sequence SGFSSSLRTSSTG. Ig-like C2-type domains are found at residues 1164 to 1266, 1286 to 1369, and 1395 to 1485; these read PTIL…IAVT, PAVT…TQLL, and PSVL…ASLV. 3 disulfides stabilise this stretch: cysteine 1202–cysteine 1250, cysteine 1308–cysteine 1353, and cysteine 1418–cysteine 1469. TSP type-1 domains are found at residues 1545 to 1608 and 1666 to 1726; these read CPSR…QLCV and CSVH…TPCE. The PLAC domain occupies 1726-1762; sequence ENMECRDTTRYCEKVKQLKLCQLSQFKSRCCGTCGKA.

Monomer. In terms of processing, C-, N- and O-glycosylated. O-fucosylated by POFUT2 on a serine or a threonine residue found within the consensus sequence C1-X(2)-(S/T)-C2-G of the TSP type-1 repeat domains where C1 and C2 are the first and second cysteine residue of the repeat, respectively. Fucosylated repeats can then be further glycosylated by the addition of a beta-1,3-glucose residue by the glucosyltransferase, B3GALTL. Fucosylation mediates the efficient secretion of ADAMTSL1. Can also be C-glycosylated with one or two mannose molecules on tryptophan residues within the consensus sequence W-X-X-W of the TPRs, and N-glycosylated. These other glycosylations can also facilitate secretion. Disulfide bonds are present. In terms of tissue distribution, expressed primarily in adult skeletal muscle.

It is found in the secreted. The protein resides in the extracellular space. The protein localises to the extracellular matrix. The protein is ADAMTS-like protein 1 (ADAMTSL1) of Homo sapiens (Human).